Here is a 522-residue protein sequence, read N- to C-terminus: DNA-binding protein Ikaros (522 aa).

Disordered regions lie at residues 1 to 48 (MEME…HNNR) and 96 to 115 (AKVN…YSSA). 4 consecutive C2H2-type zinc fingers follow at residues 125 to 147 (LKCD…KRSH), 153 to 175 (FQCT…IKLH), 181 to 203 (FKCH…LRTH), and 209 to 232 (HKCA…ERCH). The segment at 379 to 406 (KSASSEKDGSPSHSGQDSTDTESNNEEK) is disordered. 2 consecutive C2H2-type zinc fingers follow at residues 468–490 (YRCE…MGCH) and 496–520 (FECN…RGEH).

This sequence belongs to the Ikaros C2H2-type zinc-finger protein family. As to expression, expression mainly limited to thymus, spleen and pronephros. Very low expression in liver. No expression in testis, brain, eye and muscle.

The protein localises to the nucleus. Functionally, binds and activates the enhancer (delta-A element) of the CD3-delta gene. Functions in the specification and the maturation of the T-lymphocyte. Also interacts with a critical control element in the TDT (terminal deoxynucleotidyltransferase) promoter as well as with the promoters for other genes expressed during early stages of B- and T-cell development. Function is isoform-specific and is modulated by dominant-negative inactive isoforms. This chain is DNA-binding protein Ikaros (ikzf1), found in Oncorhynchus mykiss (Rainbow trout).